The following is a 481-amino-acid chain: Arginine biosynthesis bifunctional protein ArgJ, chloroplastic (481 aa).

The substrate site is built by T225, K251, T262, E349, N476, and T481. The Nucleophile role is filled by T262.

The protein belongs to the ArgJ family. Heterodimer of an alpha and a beta chain.

The protein resides in the plastid. It is found in the chloroplast. The enzyme catalyses N(2)-acetyl-L-ornithine + L-glutamate = N-acetyl-L-glutamate + L-ornithine. The catalysed reaction is L-glutamate + acetyl-CoA = N-acetyl-L-glutamate + CoA + H(+). It functions in the pathway amino-acid biosynthesis; L-arginine biosynthesis; L-ornithine and N-acetyl-L-glutamate from L-glutamate and N(2)-acetyl-L-ornithine (cyclic): step 1/1. Its pathway is amino-acid biosynthesis; L-arginine biosynthesis; N(2)-acetyl-L-ornithine from L-glutamate: step 1/4. Functionally, catalyzes two activities which are involved in the cyclic version of arginine biosynthesis: the synthesis of acetylglutamate from glutamate and acetyl-CoA, and of ornithine by transacetylation between acetylornithine and glutamate. This is Arginine biosynthesis bifunctional protein ArgJ, chloroplastic from Populus trichocarpa (Western balsam poplar).